The sequence spans 111 residues: Large ribosomal subunit protein uL22 (111 aa).

Belongs to the universal ribosomal protein uL22 family. As to quaternary structure, part of the 50S ribosomal subunit.

Functionally, this protein binds specifically to 23S rRNA; its binding is stimulated by other ribosomal proteins, e.g. L4, L17, and L20. It is important during the early stages of 50S assembly. It makes multiple contacts with different domains of the 23S rRNA in the assembled 50S subunit and ribosome. Its function is as follows. The globular domain of the protein is located near the polypeptide exit tunnel on the outside of the subunit, while an extended beta-hairpin is found that lines the wall of the exit tunnel in the center of the 70S ribosome. The polypeptide is Large ribosomal subunit protein uL22 (Chlamydia caviae (strain ATCC VR-813 / DSM 19441 / 03DC25 / GPIC) (Chlamydophila caviae)).